The chain runs to 105 residues: MIASKFGIGQQVRHSLHGYLGVVIDIDPEYSLAPPEPDEVANNKTLRSSPWYHVVIEDDDGQPVHTYLAEAQLTYEDVDAHPEQPSLDELAASIRHQLQAPHLRN.

Positions 80-105 (AHPEQPSLDELAASIRHQLQAPHLRN) are disordered.

It belongs to the HspQ family.

Its subcellular location is the cytoplasm. Involved in the degradation of certain denaturated proteins, including DnaA, during heat shock stress. The sequence is that of Heat shock protein HspQ from Yersinia pseudotuberculosis serotype O:1b (strain IP 31758).